The primary structure comprises 860 residues: Alpha,alpha-trehalose-phosphate synthase [UDP-forming] 6 (860 aa).

A Phosphoserine modification is found at serine 5. The segment at 53 to 557 (DRIIIVANEL…ARSFLQDLER (505 aa)) is glycosyltransferase.

It in the N-terminal section; belongs to the glycosyltransferase 20 family. The protein in the C-terminal section; belongs to the trehalose phosphatase family. In terms of assembly, binds to the phosphopeptide-binding site of GRF/14-3-3. Post-translationally, phosphorylated. As to expression, expressed in seedlings, leaves, stems, flowers, siliques and roots.

It catalyses the reaction D-glucose 6-phosphate + UDP-alpha-D-glucose = alpha,alpha-trehalose 6-phosphate + UDP + H(+). In terms of biological role, regulates plant architecture, shape of epidermal pavement cells and branching of trichomes. The polypeptide is Alpha,alpha-trehalose-phosphate synthase [UDP-forming] 6 (Arabidopsis thaliana (Mouse-ear cress)).